Consider the following 588-residue polypeptide: ATP-dependent lipid A-core flippase (588 aa).

A run of 6 helical transmembrane segments spans residues 23-43, 56-76, 141-161, 162-182, 257-277, and 278-298; these read FWPV…IDAG, FITI…IGIT, DALT…TVMM, VICW…GIIV, LVIA…STVI, and TISA…IKPM. The region spanning 28–310 is the ABC transmembrane type-1 domain; it reads LLGVLANILY…LTTLNATIQR (283 aa). In terms of domain architecture, ABC transporter spans 342-576; the sequence is IEFKHVYHAY…DGHYAQLYKV (235 aa). An ATP-binding site is contributed by 375–382; it reads GHSGSGKT.

This sequence belongs to the ABC transporter superfamily. Lipid exporter (TC 3.A.1.106) family. As to quaternary structure, homodimer.

The protein localises to the cell inner membrane. The catalysed reaction is ATP + H2O + lipid A-core oligosaccharideSide 1 = ADP + phosphate + lipid A-core oligosaccharideSide 2.. In terms of biological role, involved in lipopolysaccharide (LPS) biosynthesis. Translocates lipid A-core from the inner to the outer leaflet of the inner membrane. Transmembrane domains (TMD) form a pore in the inner membrane and the ATP-binding domain (NBD) is responsible for energy generation. The polypeptide is ATP-dependent lipid A-core flippase (Legionella pneumophila subsp. pneumophila (strain Philadelphia 1 / ATCC 33152 / DSM 7513)).